The following is a 590-amino-acid chain: Aspartate--tRNA(Asp/Asn) ligase (590 aa).

Glu-182 is a binding site for L-aspartate. The tract at residues 206 to 209 (QLFK) is aspartate. Arg-228 contributes to the L-aspartate binding site. Residues 228 to 230 (RDE) and Gln-237 each bind ATP. His-454 is an L-aspartate binding site. ATP is bound at residue Glu-488. Arg-495 is a binding site for L-aspartate. 540–543 (GLDR) contacts ATP.

This sequence belongs to the class-II aminoacyl-tRNA synthetase family. Type 1 subfamily. As to quaternary structure, homodimer.

The protein localises to the cytoplasm. It catalyses the reaction tRNA(Asx) + L-aspartate + ATP = L-aspartyl-tRNA(Asx) + AMP + diphosphate. Aspartyl-tRNA synthetase with relaxed tRNA specificity since it is able to aspartylate not only its cognate tRNA(Asp) but also tRNA(Asn). Reaction proceeds in two steps: L-aspartate is first activated by ATP to form Asp-AMP and then transferred to the acceptor end of tRNA(Asp/Asn). This Halothermothrix orenii (strain H 168 / OCM 544 / DSM 9562) protein is Aspartate--tRNA(Asp/Asn) ligase.